Reading from the N-terminus, the 498-residue chain is NAD(P)H-quinone oxidoreductase subunit 2, chloroplastic (498 aa).

The next 14 helical transmembrane spans lie at 18 to 38 (LTIL…VIDL), 51 to 71 (ISMV…GFFT), 87 to 107 (FFLL…ILCS), 111 to 131 (LAEF…LSCA), 134 to 154 (LVTI…LSGY), 168 to 188 (FLLM…LLYG), 211 to 231 (IIYL…SLFP), 244 to 264 (PTPV…ALFT), 278 to 298 (WHVA…LIAV), 306 to 326 (MLAF…LSAD), 337 to 357 (YTFI…LFGL), 379 to 399 (FSLV…GFFG), 411 to 431 (GLYS…YYYL), and 470 to 490 (IAMI…DPII).

It belongs to the complex I subunit 2 family. In terms of assembly, NDH is composed of at least 16 different subunits, 5 of which are encoded in the nucleus.

Its subcellular location is the plastid. The protein localises to the chloroplast thylakoid membrane. It catalyses the reaction a plastoquinone + NADH + (n+1) H(+)(in) = a plastoquinol + NAD(+) + n H(+)(out). It carries out the reaction a plastoquinone + NADPH + (n+1) H(+)(in) = a plastoquinol + NADP(+) + n H(+)(out). NDH shuttles electrons from NAD(P)H:plastoquinone, via FMN and iron-sulfur (Fe-S) centers, to quinones in the photosynthetic chain and possibly in a chloroplast respiratory chain. The immediate electron acceptor for the enzyme in this species is believed to be plastoquinone. Couples the redox reaction to proton translocation, and thus conserves the redox energy in a proton gradient. The polypeptide is NAD(P)H-quinone oxidoreductase subunit 2, chloroplastic (Adiantum capillus-veneris (Maidenhair fern)).